A 230-amino-acid polypeptide reads, in one-letter code: Cytochrome c oxidase subunit 2 (230 aa).

Residues 1–14 (MAHPSQLGFQDAAS) are Mitochondrial intermembrane-facing. Residues 15–45 (PVMEELIHFHDHTLMIVFLISTLVLYIITAM) traverse the membrane as a helical segment. Residues 46-59 (VSTKLTNKYILDSQ) lie on the Mitochondrial matrix side of the membrane. A helical transmembrane segment spans residues 60 to 87 (EIEIVWTILPAIILIMIALPSLRILYLM). Over 88-230 (DEINDPHLTI…TWSSLMLEEA (143 aa)) the chain is Mitochondrial intermembrane. Cu cation contacts are provided by His161, Cys196, Glu198, Cys200, His204, and Met207. Glu198 lines the Mg(2+) pocket.

Belongs to the cytochrome c oxidase subunit 2 family. In terms of assembly, component of the cytochrome c oxidase (complex IV, CIV), a multisubunit enzyme composed of 14 subunits. The complex is composed of a catalytic core of 3 subunits MT-CO1, MT-CO2 and MT-CO3, encoded in the mitochondrial DNA, and 11 supernumerary subunits COX4I, COX5A, COX5B, COX6A, COX6B, COX6C, COX7A, COX7B, COX7C, COX8 and NDUFA4, which are encoded in the nuclear genome. The complex exists as a monomer or a dimer and forms supercomplexes (SCs) in the inner mitochondrial membrane with NADH-ubiquinone oxidoreductase (complex I, CI) and ubiquinol-cytochrome c oxidoreductase (cytochrome b-c1 complex, complex III, CIII), resulting in different assemblies (supercomplex SCI(1)III(2)IV(1) and megacomplex MCI(2)III(2)IV(2)). Found in a complex with TMEM177, COA6, COX18, COX20, SCO1 and SCO2. Interacts with TMEM177 in a COX20-dependent manner. Interacts with COX20. Interacts with COX16. It depends on Cu cation as a cofactor.

It localises to the mitochondrion inner membrane. The enzyme catalyses 4 Fe(II)-[cytochrome c] + O2 + 8 H(+)(in) = 4 Fe(III)-[cytochrome c] + 2 H2O + 4 H(+)(out). Component of the cytochrome c oxidase, the last enzyme in the mitochondrial electron transport chain which drives oxidative phosphorylation. The respiratory chain contains 3 multisubunit complexes succinate dehydrogenase (complex II, CII), ubiquinol-cytochrome c oxidoreductase (cytochrome b-c1 complex, complex III, CIII) and cytochrome c oxidase (complex IV, CIV), that cooperate to transfer electrons derived from NADH and succinate to molecular oxygen, creating an electrochemical gradient over the inner membrane that drives transmembrane transport and the ATP synthase. Cytochrome c oxidase is the component of the respiratory chain that catalyzes the reduction of oxygen to water. Electrons originating from reduced cytochrome c in the intermembrane space (IMS) are transferred via the dinuclear copper A center (CU(A)) of subunit 2 and heme A of subunit 1 to the active site in subunit 1, a binuclear center (BNC) formed by heme A3 and copper B (CU(B)). The BNC reduces molecular oxygen to 2 water molecules using 4 electrons from cytochrome c in the IMS and 4 protons from the mitochondrial matrix. In Scyliorhinus canicula (Small-spotted catshark), this protein is Cytochrome c oxidase subunit 2 (MT-CO2).